Consider the following 222-residue polypeptide: Ras-related protein Rab-21 (222 aa).

Ala-2 carries the N-acetylalanine modification. Residues Gly-25, Gly-28, Lys-29, Thr-30, Ser-31, Asn-42, Asp-43, His-45, Thr-47, and Thr-48 each contribute to the GTP site. Thr-30 provides a ligand contact to Mg(2+). The Switch 1 signature appears at 40 to 53 (KFNDKHITTLQASF). Residues Thr-48 and Asp-71 each coordinate Mg(2+). The Switch 2 signature appears at 73 to 91 (AGQERFHALGPIYYRDSNG). Residues Gly-74, Asn-129, Lys-130, Asp-132, Ala-160, and Lys-161 each coordinate GTP. 2 S-geranylgeranyl cysteine lipidation sites follow: Cys-218 and Cys-219. Cys-219 is modified (cysteine methyl ester). The propeptide at 220–222 (SSG) is removed in mature form.

The protein belongs to the small GTPase superfamily. Rab family. In terms of assembly, interacts with the cytoplasmic tail of integrins ITGA1, ITGA2, ITGA5, ITGA6, ITGA11 and ITGB1; this interaction is dependent upon its GDP/GTP cycle. Interacts with RABGEF1 (via VPS9 domain). Interacts with ANKRD27. Interacts (in GTP-bound form) with VAMP8 in response to starvation; the interaction probably regulates VAMP8 endolysosomal trafficking. Interacts (active GTP-bound form) with TMED10; the interaction is indirect and regulates TMED10 abundance and localization at the Golgi. Mg(2+) is required as a cofactor.

It is found in the endoplasmic reticulum membrane. The protein resides in the golgi apparatus. The protein localises to the trans-Golgi network. It localises to the golgi apparatus membrane. Its subcellular location is the early endosome membrane. It is found in the cytoplasmic vesicle membrane. The protein resides in the cleavage furrow. The protein localises to the cell projection. It localises to the neuron projection. It carries out the reaction GTP + H2O = GDP + phosphate + H(+). Its activity is regulated as follows. Regulated by guanine nucleotide exchange factors (GEFs) including ANKRD27 and RABGEF1, which promote the exchange of bound GDP for free GTP. Regulated by GTPase activating proteins (GAPs) which increase the GTP hydrolysis activity. Inhibited by GDP dissociation inhibitors (GDIs). In terms of biological role, the small GTPases Rab are key regulators of intracellular membrane trafficking, from the formation of transport vesicles to their fusion with membranes. Rabs cycle between an inactive GDP-bound form and an active GTP-bound form that is able to recruit to membranes different sets of downstream effectors directly responsible for vesicle formation, movement, tethering and fusion. RAB21 is involved in membrane trafficking control. Regulates integrin internalization and recycling, but does not influence the traffic of endosomally translocated receptors in general. As a result, may regulate cell adhesion and migration. During the mitosis of adherent cells, controls the endosomal trafficking of integrins which is required for the successful completion of cytokinesis. Involved in neurite growth. Following SBF2/MTMT13-mediated activation in response to starvation-induced autophagy, binds to and regulates SNARE protein VAMP8 endolysosomal transport required for SNARE-mediated autophagosome-lysosome fusion. Modulates protein levels of the cargo receptors TMED2 and TMED10, and required for appropriate Golgi localization of TMED10. The protein is Ras-related protein Rab-21 (RAB21) of Bos taurus (Bovine).